We begin with the raw amino-acid sequence, 56 residues long: Cytochrome b-c1 complex subunit 10 (56 aa).

The Mitochondrial matrix portion of the chain corresponds to 1–12 (MVTRFLGPRYRE). Residues 13–35 (LVKNWVPTAYTWGAVGAVGLVWA) form a helical membrane-spanning segment. At 36 to 56 (TDWRLILDWVPYINGKFKKDN) the chain is on the mitochondrial intermembrane side.

The protein belongs to the UQCR11/QCR10 family. Component of the ubiquinol-cytochrome c oxidoreductase (cytochrome b-c1 complex, complex III, CIII), a multisubunit enzyme composed of 11 subunits. The complex is composed of 3 respiratory subunits cytochrome b, cytochrome c1 and Rieske protein UQCRFS1, 2 core protein subunits UQCRC1/QCR1 and UQCRC2/QCR2, and 6 low-molecular weight protein subunits UQCRH/QCR6, UQCRB/QCR7, UQCRQ/QCR8, UQCR10/QCR9, UQCR11/QCR10 and subunit 9, the cleavage product of Rieske protein UQCRFS1. The complex exists as an obligatory dimer and forms supercomplexes (SCs) in the inner mitochondrial membrane with NADH-ubiquinone oxidoreductase (complex I, CI) and cytochrome c oxidase (complex IV, CIV), resulting in different assemblies (supercomplex SCI(1)III(2)IV(1) and megacomplex MCI(2)III(2)IV(2)).

The protein localises to the mitochondrion inner membrane. In terms of biological role, component of the ubiquinol-cytochrome c oxidoreductase, a multisubunit transmembrane complex that is part of the mitochondrial electron transport chain which drives oxidative phosphorylation. The respiratory chain contains 3 multisubunit complexes succinate dehydrogenase (complex II, CII), ubiquinol-cytochrome c oxidoreductase (cytochrome b-c1 complex, complex III, CIII) and cytochrome c oxidase (complex IV, CIV), that cooperate to transfer electrons derived from NADH and succinate to molecular oxygen, creating an electrochemical gradient over the inner membrane that drives transmembrane transport and the ATP synthase. The cytochrome b-c1 complex catalyzes electron transfer from ubiquinol to cytochrome c, linking this redox reaction to translocation of protons across the mitochondrial inner membrane, with protons being carried across the membrane as hydrogens on the quinol. In the process called Q cycle, 2 protons are consumed from the matrix, 4 protons are released into the intermembrane space and 2 electrons are passed to cytochrome c. QCR10 has a role in CIII assembly and RIP1 stability. This is Cytochrome b-c1 complex subunit 10 (UQCR11) from Homo sapiens (Human).